Consider the following 373-residue polypeptide: Carbamoyl phosphate synthase small chain (373 aa).

The interval Met-1–Pro-179 is CPSase. Residues Ser-47, Gly-230, and Gly-232 each coordinate L-glutamine. In terms of domain architecture, Glutamine amidotransferase type-1 spans Thr-182–Arg-373. The Nucleophile role is filled by Cys-258. L-glutamine contacts are provided by Phe-259, Gln-262, Asn-300, Gly-302, and Phe-303. Catalysis depends on residues His-348 and Glu-350.

It belongs to the CarA family. Composed of two chains; the small (or glutamine) chain promotes the hydrolysis of glutamine to ammonia, which is used by the large (or ammonia) chain to synthesize carbamoyl phosphate. Tetramer of heterodimers (alpha,beta)4.

The catalysed reaction is hydrogencarbonate + L-glutamine + 2 ATP + H2O = carbamoyl phosphate + L-glutamate + 2 ADP + phosphate + 2 H(+). It carries out the reaction L-glutamine + H2O = L-glutamate + NH4(+). The protein operates within amino-acid biosynthesis; L-arginine biosynthesis; carbamoyl phosphate from bicarbonate: step 1/1. Its pathway is pyrimidine metabolism; UMP biosynthesis via de novo pathway; (S)-dihydroorotate from bicarbonate: step 1/3. Its function is as follows. Small subunit of the glutamine-dependent carbamoyl phosphate synthetase (CPSase). CPSase catalyzes the formation of carbamoyl phosphate from the ammonia moiety of glutamine, carbonate, and phosphate donated by ATP, constituting the first step of 2 biosynthetic pathways, one leading to arginine and/or urea and the other to pyrimidine nucleotides. The small subunit (glutamine amidotransferase) binds and cleaves glutamine to supply the large subunit with the substrate ammonia. The protein is Carbamoyl phosphate synthase small chain of Mycolicibacterium paratuberculosis (strain ATCC BAA-968 / K-10) (Mycobacterium paratuberculosis).